Here is an 87-residue protein sequence, read N- to C-terminus: Acyl-CoA-binding protein 2 (87 aa).

The 86-residue stretch at 2–87 (VSQLFEEKAK…VDNLIAKYSS (86 aa)) folds into the ACB domain. Residues 29-33 (YGLYK), Lys51, Lys55, and Tyr74 contribute to the an acyl-CoA site.

It belongs to the ACBP family.

In terms of biological role, binds medium- and long-chain acyl-CoA esters with very high affinity and may function as an intracellular carrier of acyl-CoA esters. In Saccharomyces pastorianus (strain ATCC 76670 / Carlsberg bottom yeast no.2 / CBS 1503 / CLIB 180 / NBRC 10610 / NRRL Y-1525) (Saaz-type lager yeast), this protein is Acyl-CoA-binding protein 2 (ACB2).